The chain runs to 310 residues: Isoaspartyl peptidase/L-asparaginase (310 aa).

Threonine 167 acts as the Nucleophile in catalysis. Substrate is bound by residues 195-198 (RVGD) and 218-221 (TGHG).

It belongs to the Ntn-hydrolase family. Heterodimer of an alpha and beta chain produced by autocleavage. Cleaved into an alpha and beta chain by autocatalysis; this activates the enzyme. The N-terminal residue of the beta subunit is responsible for the nucleophile hydrolase activity.

The protein resides in the cytoplasm. It catalyses the reaction L-asparagine + H2O = L-aspartate + NH4(+). The catalysed reaction is Cleavage of a beta-linked Asp residue from the N-terminus of a polypeptide.. Has both L-asparaginase and beta-aspartyl peptidase activity. Does not have aspartylglucosaminidase activity and is inactive toward GlcNAc-L-Asn. Likewise, has no activity toward glutamine. This Danio rerio (Zebrafish) protein is Isoaspartyl peptidase/L-asparaginase (asrgl1).